The primary structure comprises 113 residues: Dolichyl-diphosphooligosaccharide--protein glycosyltransferase subunit dad1 (113 aa).

Residues 1 to 30 (MSVSVFSVVSRFLDEYVSSTPQRLKLLDAY) are Cytoplasmic-facing. The helical transmembrane segment at 31–51 (LLYILLTGALQFLYCLLVGTF) threads the bilayer. A topological domain (lumenal) is located at residue Pro52. The chain crosses the membrane as a helical span at residues 53–73 (FNSFLSGFISSVGSFILAVCL). Over 74 to 92 (RIQINPQNKSDFQGISPER) the chain is Cytoplasmic. Residues 93–113 (AFADFLFANTILHLVVVNFIG) form a helical membrane-spanning segment.

Belongs to the DAD/OST2 family. Component of the oligosaccharyltransferase (OST) complex.

Its subcellular location is the endoplasmic reticulum membrane. Its pathway is protein modification; protein glycosylation. Functionally, subunit of the oligosaccharyl transferase (OST) complex that catalyzes the initial transfer of a defined glycan (Glc(3)Man(9)GlcNAc(2) in eukaryotes) from the lipid carrier dolichol-pyrophosphate to an asparagine residue within an Asn-X-Ser/Thr consensus motif in nascent polypeptide chains, the first step in protein N-glycosylation. N-glycosylation occurs cotranslationally and the complex associates with the Sec61 complex at the channel-forming translocon complex that mediates protein translocation across the endoplasmic reticulum (ER). All subunits are required for a maximal enzyme activity. This Xenopus laevis (African clawed frog) protein is Dolichyl-diphosphooligosaccharide--protein glycosyltransferase subunit dad1.